Here is a 134-residue protein sequence, read N- to C-terminus: uncharacterized protein (134 aa).

This is an uncharacterized protein from Homo sapiens (Human).